Here is a 313-residue protein sequence, read N- to C-terminus: Small ribosomal subunit biogenesis GTPase RsgA (313 aa).

Residues 80–237 (KVALRQVIVS…LIDTPGIKEF (158 aa)) enclose the CP-type G domain. Residues 129-132 (NKVD) and 180-188 (GQSGVGKSS) each bind GTP. Residues cysteine 261, cysteine 266, histidine 268, and cysteine 274 each coordinate Zn(2+).

This sequence belongs to the TRAFAC class YlqF/YawG GTPase family. RsgA subfamily. Monomer. Associates with 30S ribosomal subunit, binds 16S rRNA. Requires Zn(2+) as cofactor.

It is found in the cytoplasm. One of several proteins that assist in the late maturation steps of the functional core of the 30S ribosomal subunit. Helps release RbfA from mature subunits. May play a role in the assembly of ribosomal proteins into the subunit. Circularly permuted GTPase that catalyzes slow GTP hydrolysis, GTPase activity is stimulated by the 30S ribosomal subunit. The sequence is that of Small ribosomal subunit biogenesis GTPase RsgA from Borrelia recurrentis (strain A1).